Consider the following 31-residue polypeptide: Cytochrome b6-f complex subunit 6 (31 aa).

A helical transmembrane segment spans residues 3 to 23 (ILINYFLLVGFCFALASGLFL).

It belongs to the PetL family. As to quaternary structure, the 4 large subunits of the cytochrome b6-f complex are cytochrome b6, subunit IV (17 kDa polypeptide, PetD), cytochrome f and the Rieske protein, while the 4 small subunits are PetG, PetL, PetM and PetN. The complex functions as a dimer.

The protein localises to the plastid. The protein resides in the chloroplast thylakoid membrane. Component of the cytochrome b6-f complex, which mediates electron transfer between photosystem II (PSII) and photosystem I (PSI), cyclic electron flow around PSI, and state transitions. PetL is important for photoautotrophic growth as well as for electron transfer efficiency and stability of the cytochrome b6-f complex. The chain is Cytochrome b6-f complex subunit 6 from Thalassiosira pseudonana (Marine diatom).